Consider the following 637-residue polypeptide: Glutamate--cysteine ligase catalytic subunit (637 aa).

M1 carries the post-translational modification N-acetylmethionine. S5 and S8 each carry phosphoserine.

It belongs to the glutamate--cysteine ligase type 3 family. Heterodimer of a catalytic heavy chain and a regulatory light chain. In terms of tissue distribution, most abundant in kidney. Also found in liver and testis.

It catalyses the reaction L-cysteine + L-glutamate + ATP = gamma-L-glutamyl-L-cysteine + ADP + phosphate + H(+). It carries out the reaction (2S)-2-aminobutanoate + L-glutamate + ATP = gamma-L-glutamyl-(2S)-2-aminobutanoate + ADP + phosphate + H(+). The protein operates within sulfur metabolism; glutathione biosynthesis; glutathione from L-cysteine and L-glutamate: step 1/2. Feedback inhibition by glutathione. Functionally, catalyzes the ATP-dependent ligation of L-glutamate and L-cysteine and participates in the first and rate-limiting step in glutathione biosynthesis. The sequence is that of Glutamate--cysteine ligase catalytic subunit from Rattus norvegicus (Rat).